Reading from the N-terminus, the 155-residue chain is uncharacterized protein (155 aa).

This is an uncharacterized protein from Rickettsia prowazekii (strain Madrid E).